The chain runs to 421 residues: Aspartokinase (421 aa).

7–10 (KYGG) is an ATP binding site. Residue 25 to 30 (RIVATK) participates in substrate binding. S41 contributes to the ATP binding site. Substrate is bound by residues 45–49 (DTTDE), E74, 125–126 (LD), 151–154 (RGGS), and S154. Residues 174–175 (SD), 180–185 (YTADPR), and K210 contribute to the ATP site. ACT domains lie at 267 to 343 (VTVL…YDDQ) and 349 to 421 (LVGA…GTGR). Substrate-binding positions include D274, 274–279 (DKPGEA), 292–294 (NID), Q298, 360–361 (VT), 374–375 (NV), and 381–382 (SE).

The protein belongs to the aspartokinase family. As to quaternary structure, tetramer consisting of 2 isoforms Alpha (catalytic and regulation) and of a homodimer of 2 isoforms Beta (regulation).

It carries out the reaction L-aspartate + ATP = 4-phospho-L-aspartate + ADP. It participates in amino-acid biosynthesis; L-lysine biosynthesis via DAP pathway; (S)-tetrahydrodipicolinate from L-aspartate: step 1/4. It functions in the pathway amino-acid biosynthesis; L-methionine biosynthesis via de novo pathway; L-homoserine from L-aspartate: step 1/3. The protein operates within amino-acid biosynthesis; L-threonine biosynthesis; L-threonine from L-aspartate: step 1/5. Catalyzes the phosphorylation of the beta-carboxyl group of aspartic acid with ATP to yield 4-phospho-L-aspartate, which is involved in the branched biosynthetic pathway leading to the biosynthesis of amino acids lysine, threonine, isoleucine and methionine. The protein is Aspartokinase (lysC) of Corynebacterium efficiens (strain DSM 44549 / YS-314 / AJ 12310 / JCM 11189 / NBRC 100395).